A 269-amino-acid chain; its full sequence is MATQKETTRKRDKSVNFRLGLRNMLAQIHPDISVQTEALSELSNIAVFLGKKISHGAVTLLPEGTKTIKSSAVLLAAGDLYGKDLGRHAVGEMTKAVTRYGSAKESKEGSRSSKAKLQISVARSERLLREHGGCSRVSEGAAVALAAAIEYFMGEVLELAGNAARDSKKVRISVKHITLAIQNDAALFAVVGKGVFSGAGVSLISVPIPRKKARKTTEKEASSPKKKAAPKKKKAASKQKKSLSDKELAKLTKKELAKYEKEQGMSPGY.

A histone fold region spans residues 1 to 168 (MATQKETTRK…LAGNAARDSK (168 aa)). Positions 210–249 (RKKARKTTEKEASSPKKKAAPKKKKAASKQKKSLSDKELA) are disordered. Residues 224 to 241 (PKKKAAPKKKKAASKQKK) are compositionally biased toward basic residues.

The protein localises to the host nucleus. It is found in the host cytoplasm. Its subcellular location is the virion. Functionally, histone-like protein that is recruited to viral factories during viral replication and participates in viral DNA packaging and virion production probably by forming unstable nucleosome-like particles. May compact the viral DNA. This chain is Histone doublet H2B-H2A, found in Melbournevirus (MelV).